A 340-amino-acid polypeptide reads, in one-letter code: L-threonine 3-dehydrogenase (340 aa).

Residue Cys-38 coordinates Zn(2+). Active-site charge relay system residues include Thr-40 and His-43. 6 residues coordinate Zn(2+): His-63, Glu-64, Cys-93, Cys-96, Cys-99, and Cys-107. NAD(+) contacts are provided by residues Ile-175, Asp-195, Arg-200, 261-263 (LGI), and 285-286 (IY).

The protein belongs to the zinc-containing alcohol dehydrogenase family. In terms of assembly, homotetramer. It depends on Zn(2+) as a cofactor.

It localises to the cytoplasm. The enzyme catalyses L-threonine + NAD(+) = (2S)-2-amino-3-oxobutanoate + NADH + H(+). Its pathway is amino-acid degradation; L-threonine degradation via oxydo-reductase pathway; glycine from L-threonine: step 1/2. Catalyzes the NAD(+)-dependent oxidation of L-threonine to 2-amino-3-ketobutyrate. In Stenotrophomonas maltophilia (strain K279a), this protein is L-threonine 3-dehydrogenase.